Consider the following 353-residue polypeptide: Photosystem II protein D1 (353 aa).

The residue at position 2 (T2) is an N-acetylthreonine. T2 is modified (phosphothreonine). 3 consecutive transmembrane segments (helical) span residues 29 to 46, 118 to 133, and 142 to 156; these read YIGWFGVLMIPTLLTATS, HFLLGVACYMGREWEL, and WIAVAYSAPVAAATA. H118 lines the chlorophyll a pocket. Pheophytin a is bound at residue Y126. Residues D170 and E189 each contribute to the [CaMn4O5] cluster site. Residues 197–218 traverse the membrane as a helical segment; the sequence is FHMLGVAGVFGGSLFSAMHGSL. Residue H198 coordinates chlorophyll a. A quinone contacts are provided by residues H215 and 264–265; that span reads SF. H215 is a binding site for Fe cation. H272 is a binding site for Fe cation. Residues 274 to 288 traverse the membrane as a helical segment; the sequence is FLAAWPVVGIWFTAL. Residues H332, E333, D342, and A344 each contribute to the [CaMn4O5] cluster site. Positions 345–353 are excised as a propeptide; that stretch reads AVEAPSING.

It belongs to the reaction center PufL/M/PsbA/D family. PSII is composed of 1 copy each of membrane proteins PsbA, PsbB, PsbC, PsbD, PsbE, PsbF, PsbH, PsbI, PsbJ, PsbK, PsbL, PsbM, PsbT, PsbX, PsbY, PsbZ, Psb30/Ycf12, at least 3 peripheral proteins of the oxygen-evolving complex and a large number of cofactors. It forms dimeric complexes. It depends on The D1/D2 heterodimer binds P680, chlorophylls that are the primary electron donor of PSII, and subsequent electron acceptors. It shares a non-heme iron and each subunit binds pheophytin, quinone, additional chlorophylls, carotenoids and lipids. D1 provides most of the ligands for the Mn4-Ca-O5 cluster of the oxygen-evolving complex (OEC). There is also a Cl(-1) ion associated with D1 and D2, which is required for oxygen evolution. The PSII complex binds additional chlorophylls, carotenoids and specific lipids. as a cofactor. In terms of processing, tyr-161 forms a radical intermediate that is referred to as redox-active TyrZ, YZ or Y-Z. C-terminally processed by CTPA; processing is essential to allow assembly of the oxygen-evolving complex and thus photosynthetic growth.

It localises to the plastid. The protein resides in the chloroplast thylakoid membrane. The catalysed reaction is 2 a plastoquinone + 4 hnu + 2 H2O = 2 a plastoquinol + O2. Photosystem II (PSII) is a light-driven water:plastoquinone oxidoreductase that uses light energy to abstract electrons from H(2)O, generating O(2) and a proton gradient subsequently used for ATP formation. It consists of a core antenna complex that captures photons, and an electron transfer chain that converts photonic excitation into a charge separation. The D1/D2 (PsbA/PsbD) reaction center heterodimer binds P680, the primary electron donor of PSII as well as several subsequent electron acceptors. This chain is Photosystem II protein D1, found in Medicago sativa (Alfalfa).